Consider the following 177-residue polypeptide: Inner membrane-spanning protein YciB (177 aa).

A run of 5 helical transmembrane segments spans residues 22-42 (IFIA…LYWI), 50-70 (INLF…IFHN), 76-96 (WKIT…QFFM), 121-141 (FFWA…ALCL), and 151-171 (VFGL…YINF).

It belongs to the YciB family.

Its subcellular location is the cell inner membrane. In terms of biological role, plays a role in cell envelope biogenesis, maintenance of cell envelope integrity and membrane homeostasis. This chain is Inner membrane-spanning protein YciB, found in Buchnera aphidicola subsp. Schizaphis graminum (strain Sg).